The chain runs to 563 residues: Arginine--tRNA ligase (563 aa).

Positions 123–133 (PNIAKDMHVGH) match the 'HIGH' region motif.

This sequence belongs to the class-I aminoacyl-tRNA synthetase family. In terms of assembly, monomer.

It is found in the cytoplasm. The enzyme catalyses tRNA(Arg) + L-arginine + ATP = L-arginyl-tRNA(Arg) + AMP + diphosphate. The protein is Arginine--tRNA ligase (argS) of Chlamydia trachomatis serovar D (strain ATCC VR-885 / DSM 19411 / UW-3/Cx).